The following is a 478-amino-acid chain: Adenosylhomocysteinase (478 aa).

The substrate site is built by threonine 57, aspartate 139, and glutamate 201. 202-204 (TTT) contacts NAD(+). 2 residues coordinate substrate: lysine 231 and aspartate 235. NAD(+)-binding positions include asparagine 236, 265–270 (GYGDVG), glutamate 288, asparagine 323, 344–346 (IGH), and asparagine 392.

It belongs to the adenosylhomocysteinase family. NAD(+) serves as cofactor.

The protein resides in the cytoplasm. It catalyses the reaction S-adenosyl-L-homocysteine + H2O = L-homocysteine + adenosine. It participates in amino-acid biosynthesis; L-homocysteine biosynthesis; L-homocysteine from S-adenosyl-L-homocysteine: step 1/1. Functionally, may play a key role in the regulation of the intracellular concentration of adenosylhomocysteine. This is Adenosylhomocysteinase from Corynebacterium efficiens (strain DSM 44549 / YS-314 / AJ 12310 / JCM 11189 / NBRC 100395).